A 761-amino-acid chain; its full sequence is MGIGHNPRLCLVPLILGLLCGGVGMTPLPEAGPQSPCSLEGVEIKGGSFRLLKAGQVLEYLCPSGFYPYPTQIRTCRSTGSWSTLQTQDRKIVKRAECKAIRCPRPQDFENGEYWPRAAYYNLSDEISFRCYDGYTLRGSANRTCQGNGRWDGETAICDDGATYCPNPGIPLGTRKVGSQYRLEDRVTYYCNRGLTLRGSEQRTCLEGGSWSGTEPSCQDSFMYDTPAEVAEAFLSSLTETIEGVDAEDGHSPGEQQKRKIVLDPSGSMNIYLVLDGSDSVGAHNFTGAKNCLRDFIEKVASYGVKPKYGLVTYATEPKVLIRVSDPKSSEADWVTDQLNQINYADHKLKAGTNTKRALLEVYNMMSREVNQFKETWNRTRHVIIIMTDGLHNMGGDPVTVIHDIRYLLDIGRNRKNPREDYLDIYVFGVGPLVNQENINALASKKDKEKHVFKLQGMENLEDVFVQMLDESRTLGLCGMVWEHKDGTAYHKQPWQAKISVTRPSKGHESCMGAIVSEYFVLTAAHCFTVDDEKHSIKVSLGGQRKEWEVKEILFHPKYDLNAKKAKGIPEFYDYDVALVRLKEKLKYETTIRPICLPCTEGSIQALRLPRSTTCQQQMQELLPAKDIEALFVSESKKTLTRKAVYIKNGDKKASCERDALRAPGYEKVKDVSEVVTPRFLCTGGVDPYADPNTCKGDSGGPLIIHKRSRFIQVGVISWGVVDVCKRPQQVPGYARDFHINLYQVLPWLKEKLQNEDLGFL.

Positions 1–25 (MGIGHNPRLCLVPLILGLLCGGVGM) are cleaved as a signal peptide. Sushi domains are found at residues 35–100 (SPCS…ECKA), 101–160 (IRCP…ICDD), and 163–220 (TYCP…SCQD). Cystine bridges form between Cys-37–Cys-76, Cys-62–Cys-98, Cys-103–Cys-145, Cys-131–Cys-158, Cys-165–Cys-205, and Cys-191–Cys-218. Asn-122 and Asn-142 each carry an N-linked (GlcNAc...) asparagine glycan. Positions 270 to 469 (NIYLVLDGSD…NLEDVFVQML (200 aa)) constitute a VWFA domain. The Mg(2+) site is built by Ser-278 and Ser-280. Asn-285 carries N-linked (GlcNAc...) asparagine glycosylation. Thr-353 is a Mg(2+) binding site. N-linked (GlcNAc...) asparagine glycosylation is present at Asn-378. In terms of domain architecture, Peptidase S1 spans 477–754 (LCGMVWEHKD…VLPWLKEKLQ (278 aa)). Disulfide bonds link Cys-478–Cys-596, Cys-511–Cys-527, Cys-599–Cys-615, Cys-656–Cys-682, and Cys-695–Cys-725. Catalysis depends on charge relay system residues His-526 and Asp-576. Ser-699 functions as the Charge relay system in the catalytic mechanism.

Belongs to the peptidase S1 family. As to quaternary structure, monomer. Interacts with complement C3b; this interaction is dependent on the presence of Mg(2+). Catalytic component of the C3 convertase of the alternative complement pathway, also named C3bBb, composed of complement factor B Bb and complement C3b. Catalytic component of the C5 convertase of the alternative complement pathway, also named C3bBb3b, composed of complement factor B Bb and additional molecules of complement C3b. Interacts to CFP; this interaction contributes to the stabilization of the active C3-convertase enzyme complex. Mg(2+) is required as a cofactor. Requires Mn(2+) as cofactor. Cleaved by CFD following activation of the alternative complement system, generating Ba and Bb chains. Cleavage and activation takes place when CFB is already associated with complement C3b.

The protein localises to the secreted. Its subcellular location is the cell surface. The enzyme catalyses Cleavage of Arg-|-Ser bond in complement component C3 alpha-chain to yield C3a and C3b, and Arg-|-Xaa bond in complement component C5 alpha-chain to yield C5a and C5b.. Functionally, precursor of the catalytic component of the C3 and C5 convertase complexes of the alternative pathway of the complement system, a cascade of proteins that leads to phagocytosis and breakdown of pathogens and signaling that strengthens the adaptive immune system. The alternative complement pathway acts as an amplification loop that enhances other complement pathways (classical, lectin and GZMK) by promoting formation of additional C3 and C5 convertases. CFB is cleaved and activated by CFD to generate Ba and Bb chains; Bb chain constituting the catalytic component of the C3 and C5 convertases. Serine protease component of the complement C3 and C5 convertase complexes of the alternative complement pathway. Following cleavage and activation by factor D (CFD), forms the C3 convertase together with complement C3b. As part of the C3 convertase, cleaves and activates C3 into C3a anaphylatoxin and C3b opsonin, the next components of the complement pathways. When an additional complement C3b molecule binds to the C3 convertase, forms the C5 convertase, which cleaves and activates C5 into C5a anaphylatoxin and C5b component of the membrane attack complex. In terms of biological role, involved in proliferation and differentiation of preactivated B-lymphocytes, rapid spreading of peripheral blood monocytes, stimulation of lymphocyte blastogenesis and lysis of erythrocytes. This is Complement factor B (CFB) from Bos taurus (Bovine).